A 447-amino-acid polypeptide reads, in one-letter code: tRNA-2-methylthio-N(6)-dimethylallyladenosine synthase (447 aa).

One can recognise an MTTase N-terminal domain in the interval 8-126 (KKVVTLAYGC…FQRLLEEAEE (119 aa)). Positions 17, 53, 87, 162, 166, and 169 each coordinate [4Fe-4S] cluster. Residues 148 to 378 (AKGKLKAYVN…ITVQNAQSLA (231 aa)) enclose the Radical SAM core domain. Residues 381-444 (QEMIGKTCEV…SWTLFGECRA (64 aa)) form the TRAM domain.

The protein belongs to the methylthiotransferase family. MiaB subfamily. In terms of assembly, monomer. The cofactor is [4Fe-4S] cluster.

The protein localises to the cytoplasm. The catalysed reaction is N(6)-dimethylallyladenosine(37) in tRNA + (sulfur carrier)-SH + AH2 + 2 S-adenosyl-L-methionine = 2-methylsulfanyl-N(6)-dimethylallyladenosine(37) in tRNA + (sulfur carrier)-H + 5'-deoxyadenosine + L-methionine + A + S-adenosyl-L-homocysteine + 2 H(+). Catalyzes the methylthiolation of N6-(dimethylallyl)adenosine (i(6)A), leading to the formation of 2-methylthio-N6-(dimethylallyl)adenosine (ms(2)i(6)A) at position 37 in tRNAs that read codons beginning with uridine. The sequence is that of tRNA-2-methylthio-N(6)-dimethylallyladenosine synthase from Desulfitobacterium hafniense (strain Y51).